A 166-amino-acid polypeptide reads, in one-letter code: CDP-archaeol synthase (166 aa).

Helical transmembrane passes span 7–27 (LLLS…GPFI), 55–75 (LIVA…FFTA), 78–98 (TLIS…GAFI), 116–136 (LDFV…ITWY), and 138–158 (FLFI…VAYL).

Belongs to the CDP-archaeol synthase family. Mg(2+) is required as a cofactor.

It is found in the cell membrane. It catalyses the reaction 2,3-bis-O-(geranylgeranyl)-sn-glycerol 1-phosphate + CTP + H(+) = CDP-2,3-bis-O-(geranylgeranyl)-sn-glycerol + diphosphate. It functions in the pathway membrane lipid metabolism; glycerophospholipid metabolism. Functionally, catalyzes the formation of CDP-2,3-bis-(O-geranylgeranyl)-sn-glycerol (CDP-archaeol) from 2,3-bis-(O-geranylgeranyl)-sn-glycerol 1-phosphate (DGGGP) and CTP. This reaction is the third ether-bond-formation step in the biosynthesis of archaeal membrane lipids. In Saccharolobus islandicus (strain Y.N.15.51 / Yellowstone #2) (Sulfolobus islandicus), this protein is CDP-archaeol synthase.